Here is a 189-residue protein sequence, read N- to C-terminus: Translation machinery-associated protein 22 (189 aa).

Positions 94–165 (VTIKRIERNK…EAKDYIEKLL (72 aa)) constitute an SUI1 domain.

It belongs to the DENR family. In terms of assembly, interacts with the 40S ribosomal subunit.

The protein localises to the cytoplasm. This chain is Translation machinery-associated protein 22 (TMA22), found in Debaryomyces hansenii (strain ATCC 36239 / CBS 767 / BCRC 21394 / JCM 1990 / NBRC 0083 / IGC 2968) (Yeast).